Here is a 378-residue protein sequence, read N- to C-terminus: Transmembrane protein adipocyte-associated 1 homolog (378 aa).

Asn-16, Asn-25, and Asn-36 each carry an N-linked (GlcNAc...) asparagine glycan. 7 helical membrane passes run 61-81 (VMLLIPNVAFLVFLMWKLPSA), 88-108 (TSSPIFVAFYILVFVVAAVGI), 136-156 (FFLLAIELSVIILGLAFGHLE), 164-184 (VLAITAVLSLAYSITQGTLEI), 205-225 (HFWLASSCFFFLVYSLIVILP), 247-267 (ILALLNLVQGLGSALLCADII), and 278-298 (FLYFSVFAPLIYVTFLKGFFG). Residues 316–335 (DSDVHLPHTSSSGLGRKDLD) are disordered.

This sequence belongs to the UPF0359 family.

Its subcellular location is the membrane. The protein is Transmembrane protein adipocyte-associated 1 homolog (tpra1) of Danio rerio (Zebrafish).